Reading from the N-terminus, the 589-residue chain is Aspartate--tRNA(Asp/Asn) ligase (589 aa).

Glu-172 is an L-aspartate binding site. An aspartate region spans residues 196–199 (QLFK). Arg-218 contributes to the L-aspartate binding site. ATP is bound by residues 218–220 (RDE) and Gln-227. His-449 serves as a coordination point for L-aspartate. Glu-483 contacts ATP. An L-aspartate-binding site is contributed by Arg-490. 535-538 (GVDR) contributes to the ATP binding site.

It belongs to the class-II aminoacyl-tRNA synthetase family. Type 1 subfamily. Homodimer.

It localises to the cytoplasm. It carries out the reaction tRNA(Asx) + L-aspartate + ATP = L-aspartyl-tRNA(Asx) + AMP + diphosphate. In terms of biological role, aspartyl-tRNA synthetase with relaxed tRNA specificity since it is able to aspartylate not only its cognate tRNA(Asp) but also tRNA(Asn). Reaction proceeds in two steps: L-aspartate is first activated by ATP to form Asp-AMP and then transferred to the acceptor end of tRNA(Asp/Asn). The protein is Aspartate--tRNA(Asp/Asn) ligase of Francisella philomiragia subsp. philomiragia (strain ATCC 25017 / CCUG 19701 / FSC 153 / O#319-036).